We begin with the raw amino-acid sequence, 475 residues long: D-lactate dehydrogenase (475 aa).

The FAD-binding PCMH-type domain maps to 43–222; that stretch reads YGKARPEVLV…TELTLKVIPA (180 aa).

The protein belongs to the FAD-binding oxidoreductase/transferase type 4 family. FAD serves as cofactor. Zn(2+) is required as a cofactor.

The catalysed reaction is (R)-lactate + A = pyruvate + AH2. Functionally, catalyzes the dehydrogenation of (R)-lactate (D-lactate) to pyruvate. Active in vitro with the artificial electron acceptor 2,6-dichlorophenolindophenol (DCPIP), but not with NAD, NADP, or cytochrome c. Also displays a very low oxidase activity in vitro on D-lactate and L-lactate with O2 as the electron acceptor, but this activity is most likely not physiological. This is D-lactate dehydrogenase from Anaerostipes hadrus.